Here is a 179-residue protein sequence, read N- to C-terminus: Ribosome maturation factor RimM (179 aa).

In terms of domain architecture, PRC barrel spans 96-179 (DNEFYWVDLI…KITVDWGLDY (84 aa)).

Belongs to the RimM family. As to quaternary structure, binds ribosomal protein uS19.

The protein localises to the cytoplasm. Functionally, an accessory protein needed during the final step in the assembly of 30S ribosomal subunit, possibly for assembly of the head region. Essential for efficient processing of 16S rRNA. May be needed both before and after RbfA during the maturation of 16S rRNA. It has affinity for free ribosomal 30S subunits but not for 70S ribosomes. This is Ribosome maturation factor RimM from Janthinobacterium sp. (strain Marseille) (Minibacterium massiliensis).